Here is a 350-residue protein sequence, read N- to C-terminus: Methylthioribose-1-phosphate isomerase (350 aa).

Substrate-binding positions include arginine 48–alanine 50, arginine 93, and glutamine 198. Aspartate 239 serves as the catalytic Proton donor. Position 249–250 (asparagine 249–lysine 250) interacts with substrate.

This sequence belongs to the eIF-2B alpha/beta/delta subunits family. MtnA subfamily.

The catalysed reaction is 5-(methylsulfanyl)-alpha-D-ribose 1-phosphate = 5-(methylsulfanyl)-D-ribulose 1-phosphate. It participates in amino-acid biosynthesis; L-methionine biosynthesis via salvage pathway; L-methionine from S-methyl-5-thio-alpha-D-ribose 1-phosphate: step 1/6. Functionally, catalyzes the interconversion of methylthioribose-1-phosphate (MTR-1-P) into methylthioribulose-1-phosphate (MTRu-1-P). This is Methylthioribose-1-phosphate isomerase from Fervidobacterium nodosum (strain ATCC 35602 / DSM 5306 / Rt17-B1).